The following is a 213-amino-acid chain: Isopentenyl-diphosphate Delta-isomerase (213 aa).

Residues 1–10 (MRDSMSEADR) are compositionally biased toward basic and acidic residues. The segment at 1 to 34 (MRDSMSEADRSSPGSGKTDREDETAENATQDVIA) is disordered. The Mn(2+) site is built by histidine 51, histidine 58, and histidine 95. In terms of domain architecture, Nudix hydrolase spans 56–193 (VRHRAFTCLL…RQLRLCPWFE (138 aa)). Residue glutamate 113 participates in Mg(2+) binding. Positions 142 and 144 each coordinate Mn(2+). Glutamate 144 is a catalytic residue.

This sequence belongs to the IPP isomerase type 1 family. Mg(2+) is required as a cofactor. Mn(2+) serves as cofactor.

The protein resides in the cytoplasm. It carries out the reaction isopentenyl diphosphate = dimethylallyl diphosphate. It participates in isoprenoid biosynthesis; dimethylallyl diphosphate biosynthesis; dimethylallyl diphosphate from isopentenyl diphosphate: step 1/1. Its function is as follows. Catalyzes the 1,3-allylic rearrangement of the homoallylic substrate isopentenyl (IPP) to its highly electrophilic allylic isomer, dimethylallyl diphosphate (DMAPP). The chain is Isopentenyl-diphosphate Delta-isomerase from Halobacterium salinarum (strain ATCC 700922 / JCM 11081 / NRC-1) (Halobacterium halobium).